A 219-amino-acid chain; its full sequence is Cytochrome b6 (219 aa).

A helical transmembrane segment spans residues Ile-32–Phe-52. Heme c is bound at residue Cys-35. The heme b site is built by His-86 and His-100. 3 consecutive transmembrane segments (helical) span residues Ser-90–Phe-110, Leu-116–Tyr-136, and Ile-190–Leu-210. Positions 191 and 206 each coordinate heme b.

The protein belongs to the cytochrome b family. PetB subfamily. As to quaternary structure, the 4 large subunits of the cytochrome b6-f complex are cytochrome b6, subunit IV (17 kDa polypeptide, PetD), cytochrome f and the Rieske protein, while the 4 small subunits are PetG, PetL, PetM and PetN. The complex functions as a dimer. Requires heme b as cofactor. It depends on heme c as a cofactor.

The protein localises to the plastid. It is found in the chloroplast thylakoid membrane. In terms of biological role, component of the cytochrome b6-f complex, which mediates electron transfer between photosystem II (PSII) and photosystem I (PSI), cyclic electron flow around PSI, and state transitions. The chain is Cytochrome b6 from Heterocapsa triquetra (Dinoflagellate).